The following is a 995-amino-acid chain: Translation initiation factor IF-2 (995 aa).

The tract at residues 53–399 (NNAGSPAPAA…SGAPRGQGQV (347 aa)) is disordered. Composition is skewed to pro residues over residues 60–87 (PAAP…PPGG) and 104–119 (TPGP…PPQS). Low complexity predominate over residues 135-160 (AAAEARAAALKAEQEAAVKAAQAARQ). The segment covering 161–171 (QQRENVRREPP) has biased composition (basic and acidic residues). A compositionally biased stretch (pro residues) spans 177 to 192 (RPGPRPGPGTMPPRPG). Residues 193–202 (SPAAGRSGAP) show a composition bias toward low complexity. Pro residues-rich tracts occupy residues 203–213 (APGPGPRPGGR) and 242–264 (RPSP…PSPA). The span at 273–363 (RPGGPGSGRP…GAAGAFGRPG (91 aa)) shows a compositional bias: gly residues. A compositionally biased stretch (basic residues) spans 367-376 (TRGRKSKKQR). In terms of domain architecture, tr-type G spans 486 to 658 (SRPPVVTVMG…VLLTADASLE (173 aa)). Positions 495–502 (GHVDHGKT) are G1. 495 to 502 (GHVDHGKT) provides a ligand contact to GTP. The interval 520–524 (GITQH) is G2. The segment at 545-548 (DTPG) is G3. GTP-binding positions include 545–549 (DTPGH) and 599–602 (NKID). The interval 599 to 602 (NKID) is G4. Residues 635 to 637 (AAK) are G5.

Belongs to the TRAFAC class translation factor GTPase superfamily. Classic translation factor GTPase family. IF-2 subfamily.

The protein resides in the cytoplasm. In terms of biological role, one of the essential components for the initiation of protein synthesis. Protects formylmethionyl-tRNA from spontaneous hydrolysis and promotes its binding to the 30S ribosomal subunits. Also involved in the hydrolysis of GTP during the formation of the 70S ribosomal complex. The chain is Translation initiation factor IF-2 from Salinispora arenicola (strain CNS-205).